The sequence spans 200 residues: 5'(3')-deoxyribonucleotidase, cytosolic type (200 aa).

D12 functions as the Nucleophile in the catalytic mechanism. Residues D12 and D14 each contribute to the Mg(2+) site. D14 acts as the Proton donor in catalysis. Residues F20, F46, Y67, and T101 each coordinate substrate. T102 is subject to Phosphothreonine. K136 provides a ligand contact to substrate. D147 lines the Mg(2+) pocket. Phosphoserine is present on S184.

Belongs to the 5'(3')-deoxyribonucleotidase family. Homodimer. Mg(2+) is required as a cofactor.

Its subcellular location is the cytoplasm. Its function is as follows. Dephosphorylates the 5' and 2'(3')-phosphates of deoxyribonucleotides, with a preference for dUMP and dTMP, intermediate activity towards dGMP, and low activity towards dCMP and dAMP. The polypeptide is 5'(3')-deoxyribonucleotidase, cytosolic type (Nt5c) (Mus musculus (Mouse)).